Here is a 244-residue protein sequence, read N- to C-terminus: 3-deoxy-manno-octulosonate cytidylyltransferase (244 aa).

It belongs to the KdsB family.

Its subcellular location is the cytoplasm. The catalysed reaction is 3-deoxy-alpha-D-manno-oct-2-ulosonate + CTP = CMP-3-deoxy-beta-D-manno-octulosonate + diphosphate. Its pathway is nucleotide-sugar biosynthesis; CMP-3-deoxy-D-manno-octulosonate biosynthesis; CMP-3-deoxy-D-manno-octulosonate from 3-deoxy-D-manno-octulosonate and CTP: step 1/1. The protein operates within bacterial outer membrane biogenesis; lipopolysaccharide biosynthesis. In terms of biological role, activates KDO (a required 8-carbon sugar) for incorporation into bacterial lipopolysaccharide in Gram-negative bacteria. The polypeptide is 3-deoxy-manno-octulosonate cytidylyltransferase (Anaeromyxobacter sp. (strain Fw109-5)).